Here is a 532-residue protein sequence, read N- to C-terminus: IQ domain-containing protein IQM4 (532 aa).

2 disordered regions span residues 47-67 (SRTN…TGME) and 85-104 (PMNK…RNSL). Positions 56–66 (NPQEKSPKTGM) are enriched in basic and acidic residues. The span at 85–94 (PMNKEDEEIV) shows a compositional bias: acidic residues. An IQ domain is found at 136–165 (LDAAATTLQKVYKSYRTRRNLADCAVVVEE). 2 disordered regions span residues 410 to 443 (SSGY…KERE) and 487 to 513 (PRIS…PRVR). Residues 487-496 (PRISPGSTRF) show a composition bias toward polar residues. Positions 499–509 (PYGPIPSPRPS) are enriched in pro residues.

As to expression, expressed in roots, cauline leaves and flowers, and at lower levels in rosette leaves, stems and siliques.

Its subcellular location is the cytoplasm. It is found in the nucleus. Functionally, may be involved in biotic and abiotic stress responses. This Arabidopsis thaliana (Mouse-ear cress) protein is IQ domain-containing protein IQM4.